A 337-amino-acid polypeptide reads, in one-letter code: MTEINEKSLLKQALAEIKKKFGNESIMVLGEKPPIDTEVFSSGSMAIDMALGIGGFPKGRIIEIYGPESSGKTTISLHAIAEVQKQGGIAAFIDAEHSIDPQYAKNLGIDIDNLILSQPDSGEQALDIVDTLTKTKAIDLIVVDSVAALVPMAELQGEMKDQVIGAQARLMSKALRKITASLNKNGTTVIFINQIREKVGVIFGNPETTPGGRGLKFYASIRLDVRKIQQITSGNDITGHSVKIKVVKNKLAIPFKTALVEIVFAKGISKSAEIAQLGEELGILVRKGSWFAYKGENIAQGKVNLKLLLENNTKLFNEIKDQIIEKLKENQQQSQTL.

Gly-66–Thr-73 lines the ATP pocket.

This sequence belongs to the RecA family.

The protein resides in the cytoplasm. Functionally, can catalyze the hydrolysis of ATP in the presence of single-stranded DNA, the ATP-dependent uptake of single-stranded DNA by duplex DNA, and the ATP-dependent hybridization of homologous single-stranded DNAs. It interacts with LexA causing its activation and leading to its autocatalytic cleavage. The polypeptide is Protein RecA (Mesomycoplasma hyopneumoniae (strain 232) (Mycoplasma hyopneumoniae)).